The primary structure comprises 361 residues: Protein-L-isoaspartate O-methyltransferase domain-containing protein 2 (361 aa).

Glycine 2 is lipidated: N-myristoyl glycine. Serine 64 is an active-site residue. AdoMet binding motif stretches follow at residues 85-94, 160-164, and 181-191; these read LNLGSGTGYL, YDRVY, and LKVGGILVMPL. Residues 240–250 form a BC-box region; that stretch reads VRSLQDLARIA. The interval 303 to 336 is disordered; that stretch reads SNPSDDNSCEDLEEERREEEEKTPPETKPDPPVN. A compositionally biased stretch (acidic residues) spans 309-320; it reads NSCEDLEEERRE. A compositionally biased stretch (basic and acidic residues) spans 321–331; the sequence is EEEKTPPETKP. The tract at residues 345–348 is CUL-box; that stretch reads LPLP.

This sequence belongs to the methyltransferase superfamily. L-isoaspartyl/D-aspartyl protein methyltransferase family.

The protein localises to the cytoplasm. In terms of biological role, may act as a substrate recognition component of an ECS (Elongin BC-CUL5-SOCS-box protein) E3 ubiquitin ligase complex which mediates the ubiquitination and subsequent proteasomal degradation of target proteins. May bind to the methyltransferase cofactor S-adenosylmethionine (AdoMet) via the N-terminal AdoMet binding motif, but probably does not display methyltransferase activity. This Homo sapiens (Human) protein is Protein-L-isoaspartate O-methyltransferase domain-containing protein 2 (PCMTD2).